We begin with the raw amino-acid sequence, 718 residues long: Ribosomal RNA large subunit methyltransferase K/L (718 aa).

In terms of domain architecture, THUMP spans 43–154; that stretch reads TQYRILLWSR…QDELVVSLDL (112 aa).

It belongs to the methyltransferase superfamily. RlmKL family.

The protein localises to the cytoplasm. The enzyme catalyses guanosine(2445) in 23S rRNA + S-adenosyl-L-methionine = N(2)-methylguanosine(2445) in 23S rRNA + S-adenosyl-L-homocysteine + H(+). It carries out the reaction guanosine(2069) in 23S rRNA + S-adenosyl-L-methionine = N(2)-methylguanosine(2069) in 23S rRNA + S-adenosyl-L-homocysteine + H(+). Specifically methylates the guanine in position 2445 (m2G2445) and the guanine in position 2069 (m7G2069) of 23S rRNA. The polypeptide is Ribosomal RNA large subunit methyltransferase K/L (Histophilus somni (strain 2336) (Haemophilus somnus)).